A 585-amino-acid polypeptide reads, in one-letter code: Mycosin-5 (585 aa).

The signal sequence occupies residues 1-39 (MQRFGTGSSRSWCGRAGTATIAAVLLASGALTGLPPAYA). One can recognise a Peptidase S8 domain in the interval 83–521 (PKYMEMLNLN…YGVVDPVAAL (439 aa)). Residues Asp109 and His141 each act as charge relay system in the active site. Residues 163–173 (VPRRPVTIPTT) show a composition bias toward low complexity. Residues 163 to 269 (VPRRPVTIPT…PALGPPPDAF (107 aa)) form a disordered region. 2 stretches are compositionally biased toward pro residues: residues 196–224 (PAPP…PQPP) and 252–267 (NPHP…PPPD). The Charge relay system role is filled by Ser466. A helical membrane pass occupies residues 552–572 (VPIWVAAGGLAGALLIGGAVF).

The protein belongs to the peptidase S8 family.

It localises to the cell membrane. The chain is Mycosin-5 from Mycobacterium tuberculosis (strain ATCC 25618 / H37Rv).